Reading from the N-terminus, the 96-residue chain is UPF0235 protein MK0273 (96 aa).

It belongs to the UPF0235 family.

The polypeptide is UPF0235 protein MK0273 (Methanopyrus kandleri (strain AV19 / DSM 6324 / JCM 9639 / NBRC 100938)).